We begin with the raw amino-acid sequence, 546 residues long: CTP synthase (546 aa).

An amidoligase domain region spans residues 1–266; sequence MTTNYIFVTG…DDLVCQRFGI (266 aa). Ser-14 provides a ligand contact to CTP. A UTP-binding site is contributed by Ser-14. Residues 15–20 and Asp-72 each bind ATP; that span reads SLGKGI. 2 residues coordinate Mg(2+): Asp-72 and Glu-140. CTP is bound by residues 147–149, 187–192, and Lys-223; these read DIE and KTKPTQ. Residues 187 to 192 and Lys-223 contribute to the UTP site; that span reads KTKPTQ. Position 239–241 (239–241) interacts with ATP; the sequence is KDV. Residues 291–542 enclose the Glutamine amidotransferase type-1 domain; that stretch reads TIGMVGKYIE…VKAAGENARG (252 aa). Residue Gly-352 coordinates L-glutamine. Cys-379 acts as the Nucleophile; for glutamine hydrolysis in catalysis. L-glutamine-binding positions include 380–383, Glu-403, and Arg-470; that span reads LGMQ. Catalysis depends on residues His-515 and Glu-517.

The protein belongs to the CTP synthase family. In terms of assembly, homotetramer.

It catalyses the reaction UTP + L-glutamine + ATP + H2O = CTP + L-glutamate + ADP + phosphate + 2 H(+). The catalysed reaction is L-glutamine + H2O = L-glutamate + NH4(+). The enzyme catalyses UTP + NH4(+) + ATP = CTP + ADP + phosphate + 2 H(+). The protein operates within pyrimidine metabolism; CTP biosynthesis via de novo pathway; CTP from UDP: step 2/2. With respect to regulation, allosterically activated by GTP, when glutamine is the substrate; GTP has no effect on the reaction when ammonia is the substrate. The allosteric effector GTP functions by stabilizing the protein conformation that binds the tetrahedral intermediate(s) formed during glutamine hydrolysis. Inhibited by the product CTP, via allosteric rather than competitive inhibition. Catalyzes the ATP-dependent amination of UTP to CTP with either L-glutamine or ammonia as the source of nitrogen. Regulates intracellular CTP levels through interactions with the four ribonucleotide triphosphates. The sequence is that of CTP synthase from Aliivibrio salmonicida (strain LFI1238) (Vibrio salmonicida (strain LFI1238)).